A 141-amino-acid chain; its full sequence is Metallothiol transferase FosB (141 aa).

The 116-residue stretch at 5-120 (SINHLLFSVS…DGHKFEFHTG (116 aa)) folds into the VOC domain. Mg(2+) contacts are provided by His-8, His-67, and Glu-116. The Proton donor/acceptor role is filled by Glu-116.

Belongs to the fosfomycin resistance protein family. FosB subfamily. In terms of assembly, homodimer. The cofactor is Mg(2+).

The protein resides in the cytoplasm. Its function is as follows. Metallothiol transferase which confers resistance to fosfomycin by catalyzing the addition of a thiol cofactor to fosfomycin. L-cysteine is probably the physiological thiol donor. The sequence is that of Metallothiol transferase FosB from Lysinibacillus sphaericus (strain C3-41).